We begin with the raw amino-acid sequence, 309 residues long: Mitochondrial import receptor subunit TOM34 (309 aa).

A Phosphoserine modification is found at S8. 3 TPR repeats span residues 9–42, 51–84, and 85–118; these read VEQL…LQAR, SVLY…VPFS, and IKPL…DNSV. The tract at residues 158-189 is disordered; the sequence is WNSLPSDNHKETAKTKSKEATATKSRVPSAGD. S160 carries the post-translational modification Phosphoserine. A compositionally biased stretch (basic and acidic residues) spans 164–178; it reads DNHKETAKTKSKEAT. A Phosphoserine modification is found at S186. 3 TPR repeats span residues 193-226, 227-260, and 261-294; these read AKAL…SSLE, SATY…DGKN, and VKAF…EPRN. A Glycyl lysine isopeptide (Lys-Gly) (interchain with G-Cter in SUMO2) cross-link involves residue K197.

This sequence belongs to the Tom34 family. In terms of assembly, interacts with HSP90A, VCP, ATP6V1D, KIAA0665, AMPK, and DMAP1 through its TPR repeat. In terms of tissue distribution, isoform 1 is ubiquitously expressed while isoform 2 is expressed only in mature testicular germ cells. Isoform 1 is expressed in all testicular cells. Isoform 2 is highly expressed in early to late pachytene cells but expression is significantly decreased in round spermatid cells.

The protein localises to the cytoplasm. The protein resides in the mitochondrion outer membrane. Its function is as follows. Plays a role in the import of cytosolically synthesized preproteins into mitochondria. Binds the mature portion of precursor proteins. Interacts with cellular components, and possesses weak ATPase activity. May be a chaperone-like protein that helps to keep newly synthesized precursors in an unfolded import compatible state. In Mus musculus (Mouse), this protein is Mitochondrial import receptor subunit TOM34 (Tomm34).